We begin with the raw amino-acid sequence, 222 residues long: Octanoyltransferase (222 aa).

One can recognise a BPL/LPL catalytic domain in the interval glycine 35–aspartate 214. Residues arginine 73–histidine 80, alanine 145–glycine 147, and glycine 158–serine 160 each bind substrate. Catalysis depends on cysteine 176, which acts as the Acyl-thioester intermediate.

This sequence belongs to the LipB family.

It is found in the cytoplasm. The catalysed reaction is octanoyl-[ACP] + L-lysyl-[protein] = N(6)-octanoyl-L-lysyl-[protein] + holo-[ACP] + H(+). It participates in protein modification; protein lipoylation via endogenous pathway; protein N(6)-(lipoyl)lysine from octanoyl-[acyl-carrier-protein]: step 1/2. Catalyzes the transfer of endogenously produced octanoic acid from octanoyl-acyl-carrier-protein onto the lipoyl domains of lipoate-dependent enzymes. Lipoyl-ACP can also act as a substrate although octanoyl-ACP is likely to be the physiological substrate. This Novosphingobium aromaticivorans (strain ATCC 700278 / DSM 12444 / CCUG 56034 / CIP 105152 / NBRC 16084 / F199) protein is Octanoyltransferase.